The chain runs to 216 residues: Acyl-homoserine-lactone synthase (216 aa).

The protein belongs to the autoinducer synthase family.

The catalysed reaction is a fatty acyl-[ACP] + S-adenosyl-L-methionine = an N-acyl-L-homoserine lactone + S-methyl-5'-thioadenosine + holo-[ACP] + H(+). Its function is as follows. Required for the synthesis of an acyl-HSL autoinducer that binds to YukR and which is involved in the regulation of motility and morphology. The sequence is that of Acyl-homoserine-lactone synthase (yukI) from Yersinia ruckeri.